Reading from the N-terminus, the 165-residue chain is Late embryogenesis abundant protein D-113 (165 aa).

Low complexity predominate over residues 1–13 (MQSMKDAAASAKA). Disordered regions lie at residues 1–76 (MQSM…IGGT) and 92–165 (GGTG…YRSY). Residues 14-60 (GMEKAKASMQEKVDQMKTRDPNEKEMARERKEERQEDAELRKQEARH) show a composition bias toward basic and acidic residues. Residues 67–76 (HVGGGGIGGT) are compositionally biased toward gly residues. A compositionally biased stretch (polar residues) spans 132-155 (TTGNQDFPNAASNNAGTRRNTRGG).

Belongs to the LEA type 1 family.

Its function is as follows. LEA proteins are late embryonic proteins abundant in higher plant seed embryos. There are two subsets of LEA proteins (5a and 5b), the first ones are expressed when the cotyledon weight reach 80 mg and the second set are expressed above 100 mg. The function of those proteins is not known. The polypeptide is Late embryogenesis abundant protein D-113 (Gossypium hirsutum (Upland cotton)).